Here is a 1150-residue protein sequence, read N- to C-terminus: DNA polymerase (1150 aa).

The interval 1-53 (MSLVQGHGTSGLFTEPPNPINQQESSGPSLPAQDAAQAFASSPRAGATSTIVN) is disordered.

Belongs to the DNA polymerase type-B family. Heterodimer with the terminal protein; this heterodimer binds to bp 9 to 18 of the genome. Forms a complex with viral pTP, DBP and hosts NFIA and POU2F1/OCT1 for initiation of replication.

Its subcellular location is the host nucleus. It catalyses the reaction DNA(n) + a 2'-deoxyribonucleoside 5'-triphosphate = DNA(n+1) + diphosphate. Eukaryotic-type DNA polymerase involved in viral genomic replication. DNA synthesis is protein primed, and acts in a strand displacement replication. Assembles in complex with viral pTP, DBP, host NFIA and host POU2F1/OCT1 on viral origin of replication. The polymerase covalently transfers dCMP onto pTP, thereby initiating complementary strand synthesis. The chain is DNA polymerase from Canis lupus familiaris (Dog).